The following is a 205-amino-acid chain: Holliday junction branch migration complex subunit RuvA (205 aa).

Residues 1–63 (MIGMLRGHVE…QDAITLFGFG (63 aa)) are domain I. The segment at 64 to 142 (TLASKRMFLQ…LSQIEGSSAT (79 aa)) is domain II. Residues 143–145 (AST) are flexible linker. The segment at 146–205 (PEDTGAEQVVEGLMSLGWHQQDAAHAVQTVCADNQIETPLNAKDVPRVLKLALTSLDRGR) is domain III.

This sequence belongs to the RuvA family. In terms of assembly, homotetramer. Forms an RuvA(8)-RuvB(12)-Holliday junction (HJ) complex. HJ DNA is sandwiched between 2 RuvA tetramers; dsDNA enters through RuvA and exits via RuvB. An RuvB hexamer assembles on each DNA strand where it exits the tetramer. Each RuvB hexamer is contacted by two RuvA subunits (via domain III) on 2 adjacent RuvB subunits; this complex drives branch migration. In the full resolvosome a probable DNA-RuvA(4)-RuvB(12)-RuvC(2) complex forms which resolves the HJ.

It localises to the cytoplasm. Functionally, the RuvA-RuvB-RuvC complex processes Holliday junction (HJ) DNA during genetic recombination and DNA repair, while the RuvA-RuvB complex plays an important role in the rescue of blocked DNA replication forks via replication fork reversal (RFR). RuvA specifically binds to HJ cruciform DNA, conferring on it an open structure. The RuvB hexamer acts as an ATP-dependent pump, pulling dsDNA into and through the RuvAB complex. HJ branch migration allows RuvC to scan DNA until it finds its consensus sequence, where it cleaves and resolves the cruciform DNA. The chain is Holliday junction branch migration complex subunit RuvA from Bifidobacterium adolescentis (strain ATCC 15703 / DSM 20083 / NCTC 11814 / E194a).